A 217-amino-acid chain; its full sequence is MRNFEKARVQMVEQLVHRGIHDTRVLEAMGTLAREKFIDEGFIEFAYDDTPLPIKNGQTISQPYMTAFMIASAHLGGGEHVLEIGTGSGYAAAIIAQIAGQIFTVERYSTLAEAAQQRFEDLGCDNIHVRTGDGSNGWPEEAPFDAIIVAAGAPEIPSPLKEQLKPGGRLIIPVGSMAGTQRLLCITRKSTEEFDEEDLGGVMFVPLVGNKAWPDMN.

Ser-61 is a catalytic residue.

The protein belongs to the methyltransferase superfamily. L-isoaspartyl/D-aspartyl protein methyltransferase family.

Its subcellular location is the cytoplasm. The enzyme catalyses [protein]-L-isoaspartate + S-adenosyl-L-methionine = [protein]-L-isoaspartate alpha-methyl ester + S-adenosyl-L-homocysteine. Catalyzes the methyl esterification of L-isoaspartyl residues in peptides and proteins that result from spontaneous decomposition of normal L-aspartyl and L-asparaginyl residues. It plays a role in the repair and/or degradation of damaged proteins. This Brucella anthropi (strain ATCC 49188 / DSM 6882 / CCUG 24695 / JCM 21032 / LMG 3331 / NBRC 15819 / NCTC 12168 / Alc 37) (Ochrobactrum anthropi) protein is Protein-L-isoaspartate O-methyltransferase.